Consider the following 296-residue polypeptide: NAD kinase (296 aa).

Aspartate 72 (proton acceptor) is an active-site residue. NAD(+) is bound by residues 72–73 (DG), 146–147 (ND), arginine 157, lysine 174, aspartate 176, 187–192 (TAYALS), and glutamine 247.

It belongs to the NAD kinase family. The cofactor is a divalent metal cation.

The protein localises to the cytoplasm. It carries out the reaction NAD(+) + ATP = ADP + NADP(+) + H(+). Functionally, involved in the regulation of the intracellular balance of NAD and NADP, and is a key enzyme in the biosynthesis of NADP. Catalyzes specifically the phosphorylation on 2'-hydroxyl of the adenosine moiety of NAD to yield NADP. The polypeptide is NAD kinase (Pseudomonas fluorescens (strain SBW25)).